We begin with the raw amino-acid sequence, 331 residues long: Mycothiol acetyltransferase (331 aa).

Position 33 (Glu-33) interacts with 1D-myo-inositol 2-(L-cysteinylamino)-2-deoxy-alpha-D-glucopyranoside. The segment covering 59–86 has biased composition (low complexity); that stretch reads HAAEATAGSAASADPADPADPAAPADPA. A disordered region spans residues 59-89; that stretch reads HAAEATAGSAASADPADPADPAAPADPADPA. 115–120 serves as a coordination point for acetyl-CoA; sequence RRGHGS. The 149-residue stretch at 183–331 folds into the N-acetyltransferase domain; it reads LRLDTFEESR…DVQLRATERG (149 aa). Glu-210, Lys-249, and Glu-261 together coordinate 1D-myo-inositol 2-(L-cysteinylamino)-2-deoxy-alpha-D-glucopyranoside. An acetyl-CoA-binding site is contributed by 265–267; sequence VAT. Tyr-299 is a binding site for 1D-myo-inositol 2-(L-cysteinylamino)-2-deoxy-alpha-D-glucopyranoside. 304–309 serves as a coordination point for acetyl-CoA; that stretch reads NAPALR.

The protein belongs to the acetyltransferase family. MshD subfamily. In terms of assembly, monomer.

The enzyme catalyses 1D-myo-inositol 2-(L-cysteinylamino)-2-deoxy-alpha-D-glucopyranoside + acetyl-CoA = mycothiol + CoA + H(+). Catalyzes the transfer of acetyl from acetyl-CoA to desacetylmycothiol (Cys-GlcN-Ins) to form mycothiol. The polypeptide is Mycothiol acetyltransferase (Brachybacterium faecium (strain ATCC 43885 / DSM 4810 / JCM 11609 / LMG 19847 / NBRC 14762 / NCIMB 9860 / 6-10)).